The primary structure comprises 329 residues: Adenylate isopentenyltransferase (329 aa).

Residues 37-44, Lys63, Thr74, 129-131, 220-222, and Lys313 each bind ATP; these read GATGTGKS, SNS, and KAI.

Belongs to the IPP transferase family. Mg(2+) serves as cofactor. Expressed in roots, stems, leaves and cones.

The catalysed reaction is dimethylallyl diphosphate + AMP = N(6)-(dimethylallyl)adenosine 5'-phosphate + diphosphate. It carries out the reaction dimethylallyl diphosphate + ADP = N(6)-(dimethylallyl)adenosine 5'-diphosphate + diphosphate. It catalyses the reaction dimethylallyl diphosphate + ATP = N(6)-(dimethylallyl)adenosine 5'-triphosphate + diphosphate. In terms of biological role, involved in cytokinin biosynthesis. Catalyzes the transfer of an isopentenyl group from dimethylallyl diphosphate (DMAPP) to ATP, ADP and AMP. GMP, IMP, CMP or UMP are not used as substrates. The polypeptide is Adenylate isopentenyltransferase (Humulus lupulus (European hop)).